Consider the following 270-residue polypeptide: Shikimate dehydrogenase (NADP(+)) (270 aa).

Residues 15–17 (SKS) and Thr62 contribute to the shikimate site. Lys66 serves as the catalytic Proton acceptor. Asp78 is an NADP(+) binding site. Residues Asn87 and Asp103 each coordinate shikimate. NADP(+) contacts are provided by residues 128–132 (GAGGA), 152–157 (NRTVDR), and Leu213. A shikimate-binding site is contributed by Tyr215. Gly237 is an NADP(+) binding site.

It belongs to the shikimate dehydrogenase family. Homodimer.

The enzyme catalyses shikimate + NADP(+) = 3-dehydroshikimate + NADPH + H(+). Its pathway is metabolic intermediate biosynthesis; chorismate biosynthesis; chorismate from D-erythrose 4-phosphate and phosphoenolpyruvate: step 4/7. In terms of biological role, involved in the biosynthesis of the chorismate, which leads to the biosynthesis of aromatic amino acids. Catalyzes the reversible NADPH linked reduction of 3-dehydroshikimate (DHSA) to yield shikimate (SA). The protein is Shikimate dehydrogenase (NADP(+)) of Halorhodospira halophila (strain DSM 244 / SL1) (Ectothiorhodospira halophila (strain DSM 244 / SL1)).